The primary structure comprises 100 residues: MRTLTILTAVLLVALQAKAEPLQAEDDPLQAKAYEADAQEQRGANDQDFAVSFAEDASSSLRALGSTRAFTCHCRRSCYSTEYSYGTCTVMGINHRFCCL.

The first 19 residues, 1–19 (MRTLTILTAVLLVALQAKA), serve as a signal peptide directing secretion. Positions 20-68 (EPLQAEDDPLQAKAYEADAQEQRGANDQDFAVSFAEDASSSLRALGSTR) are excised as a propeptide. 3 disulfides stabilise this stretch: Cys72-Cys99, Cys74-Cys88, and Cys78-Cys98.

It belongs to the alpha-defensin family. Homodimer. Self-assembles into higher-order oligomers termed nanonets, fibril-like structures that entrap microbes. Self-assembly into nanonets seems to protect against proteolytic digestion in duodenal fluid. Interacts with Y.enterocolitica invasin and S.typhimurium fliC/flagellin; the interaction creates an anchoring site for progressive DEFA6 self-assembly into nanonets. Proteolytically cleaved by trypsin at Arg-68; the propeptide is stored in the tissue of the small intestine and the mature peptide is found in the luminal fluid; cleavage may occur during or after release into the lumen. The N-terminal propeptide region suppresses self-assembly and renders DEFA6 propeptide unable to agglutinate bacteria and protect human epithelial cells from bacterial invasion. Post-translationally, under reducing conditions, naturally present in the gut owing to the low redox potential or enzymatically generated by the thioredoxin system, the disulfide bridges are opened leading to a conformational change of DEF6, thereby changing its antimicrobial spectrum. The reduced form exhibits inhibitory activity against anaerobic bacteria, in contrast to the minimal antimicrobial activity of the disulfide-linked oxidized form. The formation of higher-order nanonets and bacterial entrapment is independent of the redox state. As to expression, expressed in Paneth cells of the small intestine (at protein level).

It localises to the secreted. It is found in the cytoplasmic vesicle. Its subcellular location is the secretory vesicle. Its function is as follows. Host-defense peptide that contributes to intestinal innate immunity and mediates homeostasis at mucosal surfaces by forming higher-order oligomers that capture bacteria and prevent microbial invasion of the epithelium. After binding to bacterial surface proteins, undergoes ordered self-assembly to form fibril-like nanonets that surround and entangle bacteria and thereby prevent bacterial invasion across the epithelial barrier. Entangles and agglutinates Gram-negative bacteria, such as E.coli, S.typhimurium and Y.enterocolitica, and Gram-positive bacteria such as L.monocytogenes, thereby protecting the intestine against invasion by enteric bacterial pathogens. Blocks adhesion of C.albicans to intestinal epithelial cells and thereby suppresses fungal invasion of epithelial cells and biofilm formation. Under reducing conditions and in an acidic environment similar to the intestinal milieu, exhibits inhibitory activity against anaerobic bacteria such as B.adolescentis, L.acidophilus and B.breve, as well as B.longum and S.thermophilus, possibly by leading to alterations in bacterial cell envelope structures. The disulfide-linked oxidized form exhibits negligible antimicrobial activity against Gram-negative and Gram-positive bacteria, as compared to the enteric defensin DEFA5. In Homo sapiens (Human), this protein is Defensin-6 (DEFA6).